The sequence spans 189 residues: Prostaglandin-H2 D-isomerase (189 aa).

A signal peptide spans 1–24; it reads MATPSSLWLGLALLGTLGVLQTPA. Position 25 is a pyrrolidone carboxylic acid (Q25). A glycan (N-linked (GlcNAc...) asparagine) is linked at N49. The Nucleophile role is filled by C63. A glycan (N-linked (GlcNAc...) asparagine) is linked at N76. C87 and C184 are joined by a disulfide.

Belongs to the calycin superfamily. Lipocalin family. In terms of assembly, monomer. In terms of tissue distribution, abundant in the brain and CNS, where it is expressed in tissues of the blood-brain barrier and secreted into the cerebro-spinal fluid.

Its subcellular location is the rough endoplasmic reticulum. The protein localises to the nucleus membrane. The protein resides in the golgi apparatus. It is found in the cytoplasm. It localises to the perinuclear region. Its subcellular location is the secreted. It catalyses the reaction prostaglandin H2 = prostaglandin D2. In terms of biological role, catalyzes the conversion of PGH2 to PGD2, a prostaglandin involved in smooth muscle contraction/relaxation and a potent inhibitor of platelet aggregation. Involved in a variety of CNS functions, such as sedation, NREM sleep and PGE2-induced allodynia, and may have an anti-apoptotic role in oligodendrocytes. Binds small non-substrate lipophilic molecules, including biliverdin, bilirubin, retinal, retinoic acid and thyroid hormone, and may act as a scavenger for harmful hydrophobic molecules and as a secretory retinoid and thyroid hormone transporter. Possibly involved in development and maintenance of the blood-brain, blood-retina, blood-aqueous humor and blood-testis barrier. It is likely to play important roles in both maturation and maintenance of the central nervous system and male reproductive system. Involved in PLA2G3-dependent maturation of mast cells. PLA2G3 is secreted by immature mast cells and acts on nearby fibroblasts upstream to PTDGS to synthesize PGD2, which in turn promotes mast cell maturation and degranulation via PTGDR. The sequence is that of Prostaglandin-H2 D-isomerase (PTGDS) from Sus scrofa (Pig).